Here is a 413-residue protein sequence, read N- to C-terminus: Aspartate aminotransferase, cytoplasmic (413 aa).

L-aspartate contacts are provided by Gly39 and Trp141. Ser149 is subject to Phosphoserine. Position 195 (Asn195) interacts with L-aspartate. Lys259 is modified (N6-(pyridoxal phosphate)lysine). Arg387 serves as a coordination point for L-aspartate.

Belongs to the class-I pyridoxal-phosphate-dependent aminotransferase family. As to quaternary structure, homodimer. Requires pyridoxal 5'-phosphate as cofactor.

It is found in the cytoplasm. The catalysed reaction is L-aspartate + 2-oxoglutarate = oxaloacetate + L-glutamate. It carries out the reaction L-cysteine + 2-oxoglutarate = 2-oxo-3-sulfanylpropanoate + L-glutamate. It catalyses the reaction (2S)-2-aminobutanoate + 2-oxoglutarate = 2-oxobutanoate + L-glutamate. The enzyme catalyses 3-sulfino-L-alanine + 2-oxoglutarate = 3-sulfinopyruvate + L-glutamate. Its function is as follows. Biosynthesis of L-glutamate from L-aspartate or L-cysteine. Important regulator of levels of glutamate, the major excitatory neurotransmitter of the vertebrate central nervous system. Acts as a scavenger of glutamate in brain neuroprotection. The aspartate aminotransferase activity is involved in hepatic glucose synthesis during development and in adipocyte glyceroneogenesis. Using L-cysteine as substrate, regulates levels of mercaptopyruvate, an important source of hydrogen sulfide. Mercaptopyruvate is converted into H(2)S via the action of 3-mercaptopyruvate sulfurtransferase (3MST). Hydrogen sulfide is an important synaptic modulator and neuroprotectant in the brain. In addition, catalyzes (2S)-2-aminobutanoate, a by-product in the cysteine biosynthesis pathway. This is Aspartate aminotransferase, cytoplasmic from Homo sapiens (Human).